The chain runs to 460 residues: NADH-ubiquinone oxidoreductase chain 4 (460 aa).

13 helical membrane-spanning segments follow: residues 20–42 (AKWL…LSWL), 61–81 (PLST…ILAS), 94–113 (RAYI…AFGA), 117–139 (IMFY…RWGN), 148–168 (TYFL…LLLM), 195–215 (LWWA…GVHL), 225–245 (PIAG…YGMM), 258–278 (LAYP…SICL), 285–304 (SLIA…GILI), 308–330 (WGFT…LFCL), 351–371 (MILP…LALP), 394–414 (LILT…LFLM), and 436–456 (LLII…ELMW).

It belongs to the complex I subunit 4 family.

The protein resides in the mitochondrion membrane. It carries out the reaction a ubiquinone + NADH + 5 H(+)(in) = a ubiquinol + NAD(+) + 4 H(+)(out). Functionally, core subunit of the mitochondrial membrane respiratory chain NADH dehydrogenase (Complex I) that is believed to belong to the minimal assembly required for catalysis. Complex I functions in the transfer of electrons from NADH to the respiratory chain. The immediate electron acceptor for the enzyme is believed to be ubiquinone. The protein is NADH-ubiquinone oxidoreductase chain 4 (MT-ND4) of Oncorhynchus mykiss (Rainbow trout).